Reading from the N-terminus, the 128-residue chain is uncharacterized protein (128 aa).

The 99-residue stretch at 18–116 (CPVETTLDII…WGEKYKDRID (99 aa)) folds into the HTH hxlR-type domain.

This is an uncharacterized protein from Bacillus subtilis (strain 168).